The following is a 226-amino-acid chain: Brachyurin (226 aa).

The Peptidase S1 domain occupies 1–223; it reads IVGGVEAVPN…FLDWIQTQTG (223 aa). An intrachain disulfide couples cysteine 26 to cysteine 42. Active-site charge relay system residues include histidine 41 and aspartate 87. 2 disulfide bridges follow: cysteine 151-cysteine 164 and cysteine 174-cysteine 200. The active-site Charge relay system is the serine 178.

The protein belongs to the peptidase S1 family.

It catalyses the reaction Hydrolysis of proteins, with broad specificity for peptide bonds. Native collagen is cleaved about 75% of the length of the molecule from the N-terminus. Low activity on small molecule substrates of both trypsin and chymotrypsin.. Functionally, this enzyme is a serine protease capable of degrading the native triple helix of collagen. The protein is Brachyurin of Leptuca pugilator (Atlantic sand fiddler crab).